A 151-amino-acid chain; its full sequence is Cytochrome c-type biogenesis protein CcmE (151 aa).

Over Met1–Arg8 the chain is Cytoplasmic. Residues Leu9–Ala29 form a helical; Signal-anchor for type II membrane protein membrane-spanning segment. The Periplasmic portion of the chain corresponds to Leu30–Gly151. Heme contacts are provided by His124 and Tyr128. The tract at residues Pro131–Gly151 is disordered.

This sequence belongs to the CcmE/CycJ family.

The protein localises to the cell inner membrane. Its function is as follows. Heme chaperone required for the biogenesis of c-type cytochromes. Transiently binds heme delivered by CcmC and transfers the heme to apo-cytochromes in a process facilitated by CcmF and CcmH. This Pseudomonas fluorescens (strain ATCC BAA-477 / NRRL B-23932 / Pf-5) protein is Cytochrome c-type biogenesis protein CcmE.